A 936-amino-acid polypeptide reads, in one-letter code: Coiled-coil domain-containing protein 191 (936 aa).

2 coiled-coil regions span residues 189 to 270 (RLTM…VKAA) and 364 to 440 (RDYT…LQAA). The segment at 495–541 (LGRTTTGNLQGSLQNVSLSAPGNKQHKTLGAEPSQQPGSNETLRTTS) is disordered. Composition is skewed to polar residues over residues 497-516 (RTTTGNLQGSLQNVSLSAPG) and 527-541 (PSQQPGSNETLRTTS). Residues 554-592 (NRHVFQQQLIEKQKKKLQEQQKTILELKKNLQLAEAQWA) adopt a coiled-coil conformation. Disordered regions lie at residues 607-656 (LSKP…TPHP) and 691-714 (KAQEEERQKREAEEKEAQLERKRE). Residues 662 to 739 (EERAIQRAEC…IKRNQQLEAI (78 aa)) adopt a coiled-coil conformation.

The chain is Coiled-coil domain-containing protein 191 (CCDC191) from Homo sapiens (Human).